Consider the following 1140-residue polypeptide: DNA damage-binding protein 1 (1140 aa).

Belongs to the DDB1 family. As to quaternary structure, component of the UV-DDB complex which includes DDB1 and DDB2; the heterodimer dimerizes to give rise to a heterotetramer when bound to damaged DNA. The UV-DDB complex interacts with monoubiquitinated histone H2A and binds to XPC via the DDB2 subunit. Component of numerous DCX (DDB1-CUL4-X-box) E3 ubiquitin-protein ligase complexes which consist of a core of DDB1, CUL4A or CUL4B and RBX1. DDB1 may recruit specific substrate targeting subunits to the DCX complex. These substrate targeting subunits are generally known as DCAF (DDB1- and CUL4-associated factor) or CDW (CUL4-DDB1-associated WD40-repeat) proteins. Interacts with Fbw5 and gig. May interact with ohgt.

It localises to the cytoplasm. The protein localises to the nucleus. It participates in protein modification; protein ubiquitination. Its function is as follows. Protein, which is both involved in DNA repair and protein ubiquitination, as part of the UV-DDB complex and DCX (DDB1-CUL4-X-box) complexes, respectively. Core component of the UV-DDB complex (UV-damaged DNA-binding protein complex), a complex that recognizes UV-induced DNA damage and recruit proteins of the nucleotide excision repair pathway (the NER pathway) to initiate DNA repair. The UV-DDB complex preferentially binds to cyclobutane pyrimidine dimers (CPD), 6-4 photoproducts (6-4 PP), apurinic sites and short mismatches. Also functions as a component of numerous distinct DCX (DDB1-CUL4-X-box) E3 ubiquitin-protein ligase complexes which mediate the ubiquitination and subsequent proteasomal degradation of target proteins. The functional specificity of the DCX E3 ubiquitin-protein ligase complex is determined by the variable substrate recognition component recruited by DDB1. Required for degradation of gig. Required for genomic stability in the face of endogenous DNA lesions and for the response to MMS-induced DNA damage. Required for normal wing development. The sequence is that of DNA damage-binding protein 1 (pic) from Drosophila melanogaster (Fruit fly).